We begin with the raw amino-acid sequence, 238 residues long: Ribonuclease 3 (238 aa).

The 126-residue stretch at 11–136 folds into the RNase III domain; sequence RARLEAAIGY…LIAAIYLDGG (126 aa). Position 49 (E49) interacts with Mg(2+). Residue D53 is part of the active site. Residues D122 and E125 each contribute to the Mg(2+) site. E125 is a catalytic residue. The DRBM domain maps to 161–230; the sequence is DAKTELQEWA…AMKLLEREGV (70 aa). The segment covering 180–193 has biased composition (basic and acidic residues); it reads YRTEDRSGPDHDPR. The segment at 180–215 is disordered; that stretch reads YRTEDRSGPDHDPRFTVTVEVDGIDPETGVDRSKRG.

It belongs to the ribonuclease III family. As to quaternary structure, homodimer. Mg(2+) is required as a cofactor.

It localises to the cytoplasm. The catalysed reaction is Endonucleolytic cleavage to 5'-phosphomonoester.. Its function is as follows. Digests double-stranded RNA. Involved in the processing of primary rRNA transcript to yield the immediate precursors to the large and small rRNAs (23S and 16S). Processes some mRNAs, and tRNAs when they are encoded in the rRNA operon. Processes pre-crRNA and tracrRNA of type II CRISPR loci if present in the organism. The sequence is that of Ribonuclease 3 from Sinorhizobium medicae (strain WSM419) (Ensifer medicae).